A 502-amino-acid chain; its full sequence is Protein DETOXIFICATION 49 (502 aa).

12 helical membrane-spanning segments follow: residues 41–61 (LPLI…MLFL), 75–95 (LALG…SIGM), 123–143 (LLCS…LLFF), 153–173 (AEIF…LHPI), 190–210 (AFFA…SLGL), 216–236 (ALGA…YIVF), 267–287 (VSVC…GLLL), 293–313 (VASM…PSSL), 338–358 (RTGL…ALMV), 372–392 (IVKL…GNCP), 414–434 (LCCF…FSGF), and 439–459 (LWLG…VVLA).

This sequence belongs to the multi antimicrobial extrusion (MATE) (TC 2.A.66.1) family.

It is found in the membrane. This is Protein DETOXIFICATION 49 from Arabidopsis thaliana (Mouse-ear cress).